A 168-amino-acid chain; its full sequence is Phosphopantetheine adenylyltransferase (168 aa).

Thr14 contacts substrate. ATP-binding positions include 14–15 (TF) and His22. The substrate site is built by Lys46, Leu78, and Arg92. ATP is bound by residues 93-95 (GLR), Glu103, and 128-134 (YSFISSS).

Belongs to the bacterial CoaD family. In terms of assembly, homohexamer. Mg(2+) is required as a cofactor.

The protein resides in the cytoplasm. The enzyme catalyses (R)-4'-phosphopantetheine + ATP + H(+) = 3'-dephospho-CoA + diphosphate. It participates in cofactor biosynthesis; coenzyme A biosynthesis; CoA from (R)-pantothenate: step 4/5. Reversibly transfers an adenylyl group from ATP to 4'-phosphopantetheine, yielding dephospho-CoA (dPCoA) and pyrophosphate. The protein is Phosphopantetheine adenylyltransferase of Xanthomonas euvesicatoria pv. vesicatoria (strain 85-10) (Xanthomonas campestris pv. vesicatoria).